The sequence spans 1689 residues: DNA-directed RNA polymerase I subunit rpa1 (1689 aa).

Positions 63, 66, 73, and 76 each coordinate Zn(2+). Phosphoserine occurs at positions 159 and 161. Residues Val269–Asp280 are compositionally biased toward basic and acidic residues. The interval Val269 to Val295 is disordered. Acidic residues predominate over residues Glu281 to Val295. The Mg(2+) site is built by Asp643, Asp645, and Asp647. Positions Pro1005 to Glu1017 are bridging helix. Residues Arg1346–Glu1440 form a disordered region. Ser1438 and Ser1441 each carry phosphoserine.

The protein belongs to the RNA polymerase beta' chain family. As to quaternary structure, component of the RNA polymerase I (Pol I) complex consisting of at least 13 subunits.

It is found in the nucleus. The protein resides in the nucleolus. It carries out the reaction RNA(n) + a ribonucleoside 5'-triphosphate = RNA(n+1) + diphosphate. Functionally, DNA-dependent RNA polymerase catalyzes the transcription of DNA into RNA using the four ribonucleoside triphosphates as substrates. Largest and catalytic core component of RNA polymerase I which synthesizes ribosomal RNA precursors. Forms the polymerase active center together with the second largest subunit. A single stranded DNA template strand of the promoter is positioned within the central active site cleft of Pol I. A bridging helix emanates from RPA1 and crosses the cleft near the catalytic site and is thought to promote translocation of Pol I by acting as a ratchet that moves the RNA-DNA hybrid through the active site by switching from straight to bent conformations at each step of nucleotide addition. This Schizosaccharomyces pombe (strain 972 / ATCC 24843) (Fission yeast) protein is DNA-directed RNA polymerase I subunit rpa1 (rpa1).